Here is a 382-residue protein sequence, read N- to C-terminus: MTEQRPLTIALVAGETSGDILGAGLIRALKERVPNARFVGVAGPRMQAEGCEAWYEMEELAVMGIVEVLGRLRRLLHIRADLTKRFGELKPDVFVGIDAPDFNITLEGNLKKQGIKTIHYVSPSVWAWRQKRVFKIGRATDLVLAFLPFEKAFYDKYNVPCRFIGHTMADAMPLDPDKNGARDVLGIPHDAHCLALLPGSRGAEVEMLSADFLKTAQLLRQTYPDLEIVVPLVNAKRREQFERIKAEVAPDLSVHLLDGMGREAMVASDAALLASGTAALECMLAKCPMVVGYRMKPFTFWLAKRLVKTDYVSLPNLLAGRELVKELLQEECEPQKLAAALLPLLANGKTSHAMHDTFRELHQQIRCNADEQAAQAVLELAQ.

It belongs to the LpxB family.

It carries out the reaction 2-N,3-O-bis[(3R)-3-hydroxytetradecanoyl]-alpha-D-glucosaminyl 1-phosphate + UDP-2-N,3-O-bis[(3R)-3-hydroxytetradecanoyl]-alpha-D-glucosamine = lipid A disaccharide (E. coli) + UDP + H(+). It catalyses the reaction a lipid X + a UDP-2-N,3-O-bis[(3R)-3-hydroxyacyl]-alpha-D-glucosamine = a lipid A disaccharide + UDP + H(+). It functions in the pathway glycolipid biosynthesis; lipid IV(A) biosynthesis; lipid IV(A) from (3R)-3-hydroxytetradecanoyl-[acyl-carrier-protein] and UDP-N-acetyl-alpha-D-glucosamine: step 5/6. Condensation of UDP-2,3-diacylglucosamine and 2,3-diacylglucosamine-1-phosphate to form lipid A disaccharide, a precursor of lipid A, a phosphorylated glycolipid that anchors the lipopolysaccharide to the outer membrane of the cell. The chain is Lipid-A-disaccharide synthase from Escherichia coli O127:H6 (strain E2348/69 / EPEC).